Here is a 192-residue protein sequence, read N- to C-terminus: Pyridoxal 5'-phosphate synthase subunit PdxT (192 aa).

50-52 (GES) serves as a coordination point for L-glutamine. Cys82 serves as the catalytic Nucleophile. Residues Arg109 and 136 to 137 (IR) each bind L-glutamine. Catalysis depends on charge relay system residues His172 and Glu174.

Belongs to the glutaminase PdxT/SNO family. In the presence of PdxS, forms a dodecamer of heterodimers. Only shows activity in the heterodimer.

It carries out the reaction aldehydo-D-ribose 5-phosphate + D-glyceraldehyde 3-phosphate + L-glutamine = pyridoxal 5'-phosphate + L-glutamate + phosphate + 3 H2O + H(+). The catalysed reaction is L-glutamine + H2O = L-glutamate + NH4(+). The protein operates within cofactor biosynthesis; pyridoxal 5'-phosphate biosynthesis. Its function is as follows. Catalyzes the hydrolysis of glutamine to glutamate and ammonia as part of the biosynthesis of pyridoxal 5'-phosphate. The resulting ammonia molecule is channeled to the active site of PdxS. The protein is Pyridoxal 5'-phosphate synthase subunit PdxT of Haemophilus influenzae (strain PittGG).